The sequence spans 423 residues: Zinc finger protein Gfi-1 (423 aa).

Positions 1-20 are SNAG domain; sequence MPRSFLVKSKKAHSYHQPRS. The disordered stretch occupies residues 1–102; it reads MPRSFLVKSK…PPSPSVSPAS (102 aa). Residues Ser20 and Ser57 each carry the phosphoserine modification. The segment covering 48-57 has biased composition (basic and acidic residues); it reads SKMEPRERLS. Positions 141–258 are required for interaction with RELA; it reads RQCSALERSA…LLLGGGSYKC (118 aa). 6 consecutive C2H2-type zinc fingers follow at residues 256 to 279, 285 to 307, 313 to 335, 341 to 363, 369 to 391, and 397 to 420; these read YKCI…RRSH, FACE…KAVH, FDCK…LLIH, YPCQ…TFIH, HKCQ…SRKH, and FGCD…ETQH.

As to quaternary structure, interacts with U2AF1L4. Component of RCOR-GFI-KDM1A-HDAC complexes. Interacts directly with RCOR1, KDM1A and HDAC2. Also interacts with HDAC1. regions. Interacts (via the zinc-finger domain) with ARIH2; the interaction prevents GFI1 ubiquitination and proteasomal degradation. Interacts with PIAS3; the interaction relieves the inhibitory effect of PIAS3 on STAT3-mediated transcriptional activity. Forms a complex with EHMT2 and HDAC1 to promote 'Lys-9' dimethylation of H3 (H3K9Me2) and repress expression of target genes. Interacts directly with EHMT2. Component of the GFI1-AJUBA-HDAC1 repressor complex. Interacts directly with AJUBA (via ITS LIM domains); the interaction results in the HDAC-dependent corepression of a subset of GFI1 target genes and, occurs independent of the SNAG domain. Interacts with SPI1; the interaction inhibits SPI1 transcriptional activity targeted at macrophage-specific genes, repressing macrophage differentiation of myeloid progenitor cells and promoting granulocyte commitment. Interacts with RUNX1T1; the interaction represses HDAC-mediated transcriptional activity. Interacts with RELA; the interaction occurs on liposaccharide (LPS) stimulation controls RELA DNA binding activity and regulates endotoxin-mediated TOLL-like receptor inflammatory response. Interacts (via the C-terminal zinc fingers) with ZBTB17; the interaction results in the recruitment of GFI1 to the CDKN1A/p21 promoter and repression of CDKN1A/p21 transcription. Ubiquitinated. Restricted to lymphoid tissues and testes in adult animals.

It is found in the nucleus. Functionally, transcription repressor essential for hematopoiesis. Functions in a cell-context and development-specific manner. Binds to 5'-TAAATCAC[AT]GCA-3' in the promoter region of a large number of genes. Component of several complexes, including the EHMT2-GFI1-HDAC1, AJUBA-GFI1-HDAC1 and RCOR-GFI-KDM1A-HDAC complexes, that suppress, via histone deacetylase (HDAC) recruitment, a number of genes implicated in multilineage blood cell development. Regulates neutrophil differentiation, promotes proliferation of lymphoid cells, and is required for granulocyte development. Inhibits SPI1 transcriptional activity at macrophage-specific genes, repressing macrophage differentiation of myeloid progenitor cells and promoting granulocyte commitment. Mediates, together with U2AF1L4, the alternative splicing of CD45 and controls T-cell receptor signaling. Regulates the endotoxin-mediated Toll-like receptor (TLR) inflammatory response by antagonizing RELA. Cooperates with CBFA2T2 to regulate ITGB1-dependent neurite growth. Controls cell-cycle progression by repressing CDKNIA/p21 transcription in response to TGFB1 via recruitment of GFI1 by ZBTB17 to the CDKNIA/p21 and CDKNIB promoters. Required for the maintenance of inner ear hair cells. In addition to its role in transcription, acts as a substrate adapter for PRMT1 in the DNA damage response: facilitates the recognition of TP53BP1 and MRE11 substrates by PRMT1, promoting their methylation and the DNA damage response. This chain is Zinc finger protein Gfi-1 (Gfi1), found in Rattus norvegicus (Rat).